The primary structure comprises 226 residues: Ethylene-responsive transcription factor-like protein At4g13040 (226 aa).

Disordered stretches follow at residues 63–109 (EERS…RKRV) and 195–226 (KKPK…SDKM). Positions 97–109 (PPKRRKQHRRKRV) are enriched in basic residues. A DNA-binding region (AP2/ERF) is located at residues 105–171 (RRKRVHNQEP…REPNFELSEE (67 aa)). The segment covering 217–226 (EEEEQDSDKM) has biased composition (acidic residues).

It belongs to the AP2/ERF transcription factor family.

The protein resides in the nucleus. Probably acts as a transcriptional activator. Binds to the GCC-box pathogenesis-related promoter element. May be involved in the regulation of gene expression by stress factors and by components of stress signal transduction pathways. In Arabidopsis thaliana (Mouse-ear cress), this protein is Ethylene-responsive transcription factor-like protein At4g13040.